Reading from the N-terminus, the 302-residue chain is L-threonate dehydrogenase (302 aa).

NAD(+)-binding positions include 7 to 35 (FHVGIVGLGSMGMGAALSYVRAGLSTWGA) and T102. The active site involves K178. An NAD(+)-binding site is contributed by K246.

This sequence belongs to the HIBADH-related family. L-threonate dehydrogenase subfamily.

The enzyme catalyses L-threonate + NAD(+) = 2-dehydro-L-erythronate + NADH + H(+). In terms of biological role, catalyzes oxidation of L-threonate to 2-oxo-tetronate. Can use either NAD(+) or NADP(+) as cosubstrate, with a preference for NAD(+). The chain is L-threonate dehydrogenase from Escherichia coli (strain K12).